The chain runs to 698 residues: Elongation factor G (698 aa).

In terms of domain architecture, tr-type G spans 6-281 (ENIRNIGICA…AVVDYLPSPI (276 aa)). GTP is bound by residues 15–22 (AHIDAGKT), 79–83 (DTPGH), and 133–136 (NKMD).

This sequence belongs to the TRAFAC class translation factor GTPase superfamily. Classic translation factor GTPase family. EF-G/EF-2 subfamily.

It is found in the cytoplasm. In terms of biological role, catalyzes the GTP-dependent ribosomal translocation step during translation elongation. During this step, the ribosome changes from the pre-translocational (PRE) to the post-translocational (POST) state as the newly formed A-site-bound peptidyl-tRNA and P-site-bound deacylated tRNA move to the P and E sites, respectively. Catalyzes the coordinated movement of the two tRNA molecules, the mRNA and conformational changes in the ribosome. This is Elongation factor G from Rickettsia bellii (strain RML369-C).